The following is a 383-amino-acid chain: MQIDFAPSRQSTLGVEWELALVNARTGELVSVANDVLKGVAANHPDLNEDDEHPHIKRELLLNTVELVTGICETVKDAKEDLSRSLAAVREVTDPMGVEVFCAGSHPFSPPLLQPVTDKERYAKLIERTQWWGRQMVIYGVHVHVGIDHRDKVLPILDGLVNYFPHFQALSASSPYWAGEETGYASQRALMFQQLPTAGLPFQFETWEAYESYVQDMFTTGVIDATSEIRWDIRPVANLGTIEMRICDGLATLEEVGAIAALTQCLVDEFSSILDAGGSIPTMPPWHVQENKWRAARYGMEAIIILDAEGNEQLVTEHLAETVSRLEPVAAKLGCSEELADVLKIIQRGASYQRQRRVAAEHNGDLQAVVMDLVQQMRKGPDA.

This sequence belongs to the glutamate--cysteine ligase type 2 family. YbdK subfamily.

It carries out the reaction L-cysteine + L-glutamate + ATP = gamma-L-glutamyl-L-cysteine + ADP + phosphate + H(+). Its function is as follows. ATP-dependent carboxylate-amine ligase which exhibits weak glutamate--cysteine ligase activity. This Paenarthrobacter aurescens (strain TC1) protein is Putative glutamate--cysteine ligase 2-2.